We begin with the raw amino-acid sequence, 211 residues long: Large ribosomal subunit protein bL9 (211 aa).

Residues 183 to 211 (AAASEDEELAETAGVAPAEPSEEDDSAKA) form a disordered region. The segment covering 202 to 211 (PSEEDDSAKA) has biased composition (acidic residues).

It belongs to the bacterial ribosomal protein bL9 family.

Its function is as follows. Binds to the 23S rRNA. In Roseobacter denitrificans (strain ATCC 33942 / OCh 114) (Erythrobacter sp. (strain OCh 114)), this protein is Large ribosomal subunit protein bL9.